A 631-amino-acid chain; its full sequence is Probable G-protein coupled receptor 153 (631 aa).

Residues 1–11 (MSDERRLPSSA) are Extracellular-facing. Residues 12-32 (VGWLACGGLSLLANAWGILSV) traverse the membrane as a helical segment. At 33-41 (GAKQKKWKP) the chain is on the cytoplasmic side. Residues 42-62 (LEFLLCTLAATHMLNVAVPIA) traverse the membrane as a helical segment. Over 63–84 (TYAVVQLRRQRPDYEWNEGLCK) the chain is Extracellular. A helical membrane pass occupies residues 85–105 (VFVSTFYTLTLATCFSVTSIS). Residues 106-126 (YHRMWMVRWPVNYRLSNAKKQ) lie on the Cytoplasmic side of the membrane. The helical transmembrane segment at 127-147 (AVHTVMGIWMVSFILSALPAV) threads the bilayer. Topologically, residues 148–162 (GWHDTSERFYTHGCR) are extracellular. A helical transmembrane segment spans residues 163 to 183 (FIVAEIGLGFGVCFLLLVGGS). At 184-243 (VAMGMVCTAIALFQTLATQVGHRADRRTFTVPTIVVEDAQGKRRSSIDGSEPARTSLQIT) the chain is on the cytoplasmic side. The helical transmembrane segment at 244-264 (GLVATIVVIYDCLMGFPVLVV) threads the bilayer. Residues 265–276 (SFSSLRADASAP) are Extracellular-facing. The chain crosses the membrane as a helical span at residues 277–297 (WMALCVLWCSVTQALLLPLFL). At 298-631 (WTCDRYRADL…LHSDSLGSAS (334 aa)) the chain is on the cytoplasmic side. Disordered regions lie at residues 486 to 518 (LQPS…RSAS), 546 to 590 (QPFP…SLSA), and 603 to 631 (CGSI…GSAS). Residues 605–617 (SISSFLSSPSESS) show a composition bias toward low complexity.

It belongs to the G-protein coupled receptor 1 family.

Its subcellular location is the cell membrane. In terms of biological role, orphan receptor. The chain is Probable G-protein coupled receptor 153 (Gpr153) from Mus musculus (Mouse).